A 336-amino-acid chain; its full sequence is Phosphate acyltransferase (336 aa).

This sequence belongs to the PlsX family. Homodimer. Probably interacts with PlsY.

It is found in the cytoplasm. It carries out the reaction a fatty acyl-[ACP] + phosphate = an acyl phosphate + holo-[ACP]. It functions in the pathway lipid metabolism; phospholipid metabolism. Its function is as follows. Catalyzes the reversible formation of acyl-phosphate (acyl-PO(4)) from acyl-[acyl-carrier-protein] (acyl-ACP). This enzyme utilizes acyl-ACP as fatty acyl donor, but not acyl-CoA. The protein is Phosphate acyltransferase of Pseudomonas putida (strain ATCC 700007 / DSM 6899 / JCM 31910 / BCRC 17059 / LMG 24140 / F1).